Reading from the N-terminus, the 112-residue chain is Putative pterin-4-alpha-carbinolamine dehydratase (112 aa).

This sequence belongs to the pterin-4-alpha-carbinolamine dehydratase family.

The catalysed reaction is (4aS,6R)-4a-hydroxy-L-erythro-5,6,7,8-tetrahydrobiopterin = (6R)-L-erythro-6,7-dihydrobiopterin + H2O. The chain is Putative pterin-4-alpha-carbinolamine dehydratase from Shewanella woodyi (strain ATCC 51908 / MS32).